The chain runs to 171 residues: Actin-related protein 2/3 complex subunit 4 (171 aa).

Belongs to the ARPC4 family. Component of the Arp2/3 complex composed of ARP2, ARP3, ARC40/p41-ARC, ARC35/p34-ARC, ARC18/p21-ARC, ARC19/p20-ARC and ARC16/p16-ARC.

Its subcellular location is the cytoplasm. The protein resides in the cytoskeleton. It is found in the actin patch. In terms of biological role, functions as actin-binding component of the Arp2/3 complex which is involved in regulation of actin polymerization and together with an activating nucleation-promoting factor (NPF) mediates the formation of branched actin networks. Seems to contact the mother actin filament. The sequence is that of Actin-related protein 2/3 complex subunit 4 (ARC19) from Saccharomyces cerevisiae (strain ATCC 204508 / S288c) (Baker's yeast).